We begin with the raw amino-acid sequence, 986 residues long: MQRGIDSFFKRLPAKAKSAEAENGETPSKAPKRRKAVIISSDEDEVVSPPETKKRKASKTASSEDDVVAATPEPIAKKARNGQKPALSKLKRHVDPTELFGGETKRVIVPKPKTKAVLEFENEDIDRSLMEVDLDESIKEAAPEKKVHSITRSSPSPKRAKNSSPEPPKPKSTKSKATTPRVKKEKPAADLESSVLTDEERHERKRASAVLYQKYKNRSSCLNPGSKEIPKGSPDCLSGLTFVVTGVLESMEREEAESVIKEYGGKVMTVVGKKLKYLVVGEEAGPKKLAVAEELNIPILSEDGLFDLIREKSGIAKQVKEEKKSPKKEHSSEEKGKKEVKTSRRSSDKKEKEATKLKYGEKHDIAKHKVKEEHTSPKETKDKLNDVPAVTLKVKKEPSSQKEHPPSPRTADLKTLDVVGMAWVDKHKPTSIKEIVGQAGAASNVTKLMNWLSKWYVNHDGNKKPQRPNPWAKNDDGSFYKAALLSGPPGIGKTTTATLVVKELGFDAVEFNASDTRSKRLLKDEVSTLLSNKSLSGYFTGQGQAVSRKHVLIMDEVDGMAGNEDRGGMQELIALIKDSSIPIICMCNDRNHPKIRSLVNYCYDLRFQRPRLEQIKGKIMSICFKEKVKISPAKVEEIIAATNNDIRQSINHIALLSAKEDASQKSGQQVATKDLKLGPWEVVRKVFTADEHKHMSFADKSDLFFHDYSLAPLFVQQNYLQVLPQGNKKDVLAKVAATADALSLGDLVEKRIRANSAWSLLPTQAFFSSVLPGEHMCGHFTGQINFPGWLGKNSKSGKRARLAQELHDHTRVCTSGSRLSVRLDYAPFLLDNIVRPLAKDGQEGVPAALDVMKDYHLLREDLDSLVELTSWPGKKSPLDAVDGRVKAALTRSYNKEVMAYSYSAQAGIKKKKSEAAGADDDYLDEGPGEEDGAGGHLSSEEDEDKDNLELDSLIKAKKRTTTSKASGGSKKATSSTASKSKAKAKK.

The disordered stretch occupies residues 1–95; it reads MQRGIDSFFK…ALSKLKRHVD (95 aa). 6 positions are modified to phosphoserine: S18, S28, S40, S41, S48, and S58. T60 bears the Phosphothreonine mark. S62 and S63 each carry phosphoserine. T71 carries the phosphothreonine modification. Phosphoserine is present on residues S128, S137, S149, S154, S156, S164, and S194. Residues 136-147 are compositionally biased toward basic and acidic residues; that stretch reads ESIKEAAPEKKV. 2 disordered regions span residues 136–203 and 317–388; these read ESIK…ERHE and KQVK…NDVP. T197 carries the phosphothreonine modification. In terms of domain architecture, BRCT spans 232–322; it reads GSPDCLSGLT…SGIAKQVKEE (91 aa). 2 stretches are compositionally biased toward basic and acidic residues: residues 317 to 364 and 370 to 385; these read KQVK…EKHD and VKEEHTSPKETKDKLN. Position 487–494 (487–494) interacts with ATP; sequence GPPGIGKT. A disordered region spans residues 913–986; the sequence is SEAAGADDDY…ASKSKAKAKK (74 aa). The span at 917 to 932 shows a compositional bias: acidic residues; sequence GADDDYLDEGPGEEDG. A phosphoserine mark is found at S938 and S939. Residues 955–959 carry the Nuclear localization signal motif; the sequence is KAKKR. Residues 962–979 show a composition bias toward low complexity; that stretch reads TSKASGGSKKATSSTASK.

It belongs to the activator 1 large subunit family. Interacts with C-terminus of PCNA.

The protein localises to the nucleus. Its function is as follows. The elongation of primed DNA templates by DNA polymerase delta and epsilon requires the action of the accessory proteins proliferating cell nuclear antigen (PCNA) and activator 1. This subunit binds to the primer-template junction. The protein is Replication factor C subunit 1 (Gnf1) of Drosophila melanogaster (Fruit fly).